Reading from the N-terminus, the 168-residue chain is Crossover junction endodeoxyribonuclease RuvC (168 aa).

Catalysis depends on residues D8, E68, and D140. Mg(2+) is bound by residues D8, E68, and D140.

Belongs to the RuvC family. As to quaternary structure, homodimer which binds Holliday junction (HJ) DNA. The HJ becomes 2-fold symmetrical on binding to RuvC with unstacked arms; it has a different conformation from HJ DNA in complex with RuvA. In the full resolvosome a probable DNA-RuvA(4)-RuvB(12)-RuvC(2) complex forms which resolves the HJ. Mg(2+) serves as cofactor.

The protein resides in the cytoplasm. It carries out the reaction Endonucleolytic cleavage at a junction such as a reciprocal single-stranded crossover between two homologous DNA duplexes (Holliday junction).. In terms of biological role, the RuvA-RuvB-RuvC complex processes Holliday junction (HJ) DNA during genetic recombination and DNA repair. Endonuclease that resolves HJ intermediates. Cleaves cruciform DNA by making single-stranded nicks across the HJ at symmetrical positions within the homologous arms, yielding a 5'-phosphate and a 3'-hydroxyl group; requires a central core of homology in the junction. The consensus cleavage sequence is 5'-(A/T)TT(C/G)-3'. Cleavage occurs on the 3'-side of the TT dinucleotide at the point of strand exchange. HJ branch migration catalyzed by RuvA-RuvB allows RuvC to scan DNA until it finds its consensus sequence, where it cleaves and resolves the cruciform DNA. The sequence is that of Crossover junction endodeoxyribonuclease RuvC from Lawsonia intracellularis (strain PHE/MN1-00).